The following is a 435-amino-acid chain: Ribulose bisphosphate carboxylase-like protein (435 aa).

The Mg(2+) site is built by K198, D200, and E201. An N6-carboxylysine modification is found at K198.

The protein belongs to the RuBisCO large chain family. Type IV subfamily. In terms of assembly, homodimer. Requires Mg(2+) as cofactor.

In terms of biological role, may be involved in sulfur metabolism and oxidative stress response. Does not show RuBisCO activity. In Chlorobaculum tepidum (strain ATCC 49652 / DSM 12025 / NBRC 103806 / TLS) (Chlorobium tepidum), this protein is Ribulose bisphosphate carboxylase-like protein.